Here is a 190-residue protein sequence, read N- to C-terminus: Shikimate kinase (190 aa).

An ATP-binding site is contributed by 14-19; it reads GAGKST. Ser-18 contacts Mg(2+). Asp-36, Arg-60, and Gly-82 together coordinate substrate. ATP is bound at residue Arg-120. Substrate is bound at residue Arg-139.

It belongs to the shikimate kinase family. In terms of assembly, monomer. The cofactor is Mg(2+).

Its subcellular location is the cytoplasm. It carries out the reaction shikimate + ATP = 3-phosphoshikimate + ADP + H(+). Its pathway is metabolic intermediate biosynthesis; chorismate biosynthesis; chorismate from D-erythrose 4-phosphate and phosphoenolpyruvate: step 5/7. Its function is as follows. Catalyzes the specific phosphorylation of the 3-hydroxyl group of shikimic acid using ATP as a cosubstrate. This is Shikimate kinase from Thioalkalivibrio sulfidiphilus (strain HL-EbGR7).